The chain runs to 595 residues: UvrABC system protein C (595 aa).

Residues 14-91 (SNPGCYLHKD…IQENMPKFNI (78 aa)) enclose the GIY-YIG domain. The 36-residue stretch at 196 to 231 (DKIVNQLKAKMKDMSDQMAFERAAEYRDLIEAVSTL) folds into the UVR domain.

It belongs to the UvrC family. In terms of assembly, interacts with UvrB in an incision complex.

Its subcellular location is the cytoplasm. In terms of biological role, the UvrABC repair system catalyzes the recognition and processing of DNA lesions. UvrC both incises the 5' and 3' sides of the lesion. The N-terminal half is responsible for the 3' incision and the C-terminal half is responsible for the 5' incision. This Streptococcus thermophilus (strain ATCC BAA-491 / LMD-9) protein is UvrABC system protein C.